The following is a 254-amino-acid chain: Thiazole synthase (254 aa).

K95 acts as the Schiff-base intermediate with DXP in catalysis. 1-deoxy-D-xylulose 5-phosphate-binding positions include G156, 182–183 (AG), and 204–205 (NT).

This sequence belongs to the ThiG family. Homotetramer. Forms heterodimers with either ThiH or ThiS.

The protein resides in the cytoplasm. It catalyses the reaction [ThiS sulfur-carrier protein]-C-terminal-Gly-aminoethanethioate + 2-iminoacetate + 1-deoxy-D-xylulose 5-phosphate = [ThiS sulfur-carrier protein]-C-terminal Gly-Gly + 2-[(2R,5Z)-2-carboxy-4-methylthiazol-5(2H)-ylidene]ethyl phosphate + 2 H2O + H(+). Its pathway is cofactor biosynthesis; thiamine diphosphate biosynthesis. Functionally, catalyzes the rearrangement of 1-deoxy-D-xylulose 5-phosphate (DXP) to produce the thiazole phosphate moiety of thiamine. Sulfur is provided by the thiocarboxylate moiety of the carrier protein ThiS. In vitro, sulfur can be provided by H(2)S. This chain is Thiazole synthase, found in Shewanella sp. (strain MR-7).